A 568-amino-acid polypeptide reads, in one-letter code: 2-succinyl-5-enolpyruvyl-6-hydroxy-3-cyclohexene-1-carboxylate synthase (568 aa).

The protein belongs to the TPP enzyme family. MenD subfamily. In terms of assembly, homodimer. The cofactor is Mg(2+). Requires Mn(2+) as cofactor. It depends on thiamine diphosphate as a cofactor.

The catalysed reaction is isochorismate + 2-oxoglutarate + H(+) = 5-enolpyruvoyl-6-hydroxy-2-succinyl-cyclohex-3-ene-1-carboxylate + CO2. It functions in the pathway quinol/quinone metabolism; 1,4-dihydroxy-2-naphthoate biosynthesis; 1,4-dihydroxy-2-naphthoate from chorismate: step 2/7. Its pathway is quinol/quinone metabolism; menaquinone biosynthesis. In terms of biological role, catalyzes the thiamine diphosphate-dependent decarboxylation of 2-oxoglutarate and the subsequent addition of the resulting succinic semialdehyde-thiamine pyrophosphate anion to isochorismate to yield 2-succinyl-5-enolpyruvyl-6-hydroxy-3-cyclohexene-1-carboxylate (SEPHCHC). This is 2-succinyl-5-enolpyruvyl-6-hydroxy-3-cyclohexene-1-carboxylate synthase from Haemophilus influenzae (strain ATCC 51907 / DSM 11121 / KW20 / Rd).